The chain runs to 606 residues: Glutamine--fructose-6-phosphate aminotransferase [isomerizing] (606 aa).

C2 serves as the catalytic Nucleophile; for GATase activity. A Glutamine amidotransferase type-2 domain is found at 2 to 218 (CGIFGYLGQR…SGELAVLRIG (217 aa)). SIS domains follow at residues 278-424 (FAES…QRQE) and 455-596 (WRCR…VDRP). K601 acts as the For Fru-6P isomerization activity in catalysis.

Homodimer.

It localises to the cytoplasm. The enzyme catalyses D-fructose 6-phosphate + L-glutamine = D-glucosamine 6-phosphate + L-glutamate. Its function is as follows. Catalyzes the first step in hexosamine metabolism, converting fructose-6P into glucosamine-6P using glutamine as a nitrogen source. In Chlamydia muridarum (strain MoPn / Nigg), this protein is Glutamine--fructose-6-phosphate aminotransferase [isomerizing].